The chain runs to 370 residues: Anthranilate phosphoribosyltransferase (370 aa).

The tract at residues 1–27 is disordered; that stretch reads MALSAEGSSGGSRGGSPKAEAASVPSW. Residues G107, 110–111, T115, 117–120, 135–143, and G147 each bind 5-phospho-alpha-D-ribose 1-diphosphate; these read GD, NLST, and KHGNRAASS. G107 contacts anthranilate. S119 provides a ligand contact to Mg(2+). N138 lines the anthranilate pocket. R193 is a binding site for anthranilate. Mg(2+) is bound by residues D251 and E252.

This sequence belongs to the anthranilate phosphoribosyltransferase family. As to quaternary structure, homodimer. Mg(2+) is required as a cofactor.

The enzyme catalyses N-(5-phospho-beta-D-ribosyl)anthranilate + diphosphate = 5-phospho-alpha-D-ribose 1-diphosphate + anthranilate. It participates in amino-acid biosynthesis; L-tryptophan biosynthesis; L-tryptophan from chorismate: step 2/5. Its function is as follows. Catalyzes the transfer of the phosphoribosyl group of 5-phosphorylribose-1-pyrophosphate (PRPP) to anthranilate to yield N-(5'-phosphoribosyl)-anthranilate (PRA). This Mycobacterium bovis (strain ATCC BAA-935 / AF2122/97) protein is Anthranilate phosphoribosyltransferase.